The primary structure comprises 308 residues: Putative glutamine amidotransferase Rv2859c (308 aa).

Residues 1–62 (MDLSASRSDG…ASPRLRSPLG (62 aa)) are disordered. 3 stretches are compositionally biased toward low complexity: residues 13-24 (PLRPASPRLRSP), 31-42 (PLRPASPRLRSP), and 49-61 (PLRP…RSPL). One can recognise a Glutamine amidotransferase type-1 domain in the interval 78 to 301 (RTGVWDIPAG…VDAASGYAGR (224 aa)). The active-site Nucleophile is Cys-177. Active-site residues include His-277 and Glu-279. An Isoglutamyl lysine isopeptide (Lys-Gln) (interchain with Q-Cter in protein Pup) cross-link involves residue Lys-289.

The polypeptide is Putative glutamine amidotransferase Rv2859c (Mycobacterium tuberculosis (strain ATCC 25618 / H37Rv)).